The chain runs to 827 residues: MFKNMTLLGTLIEHSDGLPLLETNMKNMHKDHNQDASLTLLASKYNVLFPGIYMPMTLENASIIRLVKKVYETGGIIGIVAQKKEDVEATSAQDIFTIGTTARILKLINLPDERVRILLQGEEKFQIEDVIAETPYLLASISRLKDKTSNTQSKHFKAVVSSIKETVAKLISLQPEFPTEIKLLLDNINDFNLLTYFLASGLDTDIKSKQKLLEIHDSKKRGTVLLKYLLKDLEVSKLRKKIQDKVHTDIEQLQHDFYIRRQIKVLQEELGENEFEDEIDELRAEGEKKQWPKEVADYFYKALDKAERLSPNSADYPVLISHAELMLELPWSVYTTDNMDLKMAKKVLDTEHYGLEKVKERLLEYLAVRKLTQNMKGPILCLYGPPGVGKTSLGKSIAKALNRKYVKVSLGGLHDEAEIRGHRKTYVGAMPGRIIKGIQNSGSSNPVFMLDELDKITDLRGDPAAALLEVLDPEQNQAFVDTFLEVPYDLSKVLFIATANQLDTIPPALRDRLEIIEINGYTIEEKLQIAKKYLFPKQRKENGLKATDLSIHDTAIVKVIESYTRESGVRELDRKLASLVRKVGKAMVLEEPYPKKIHKEDVISLLGIELFDQEMYQQTHLPGVAIGLAWTPVGGDILFIEAILSAGKGKLTLSGQLGDVMKESAMTAFTYLKANTNLLGIPDKVFESYDLHIHLPAGAVPKDGPSAGITLFAALASLYTQRKVKDKVAMTGEITLRGKVLPVGGIKEKILAAKRAGIKEVILSKENKKDIQEIKQKDIQDLKFHYVEFVEEVIQLALQPSKVEAAKDWSITKKRKQQPGIGHVSTL.

Residues 38–233 form the Lon N-terminal domain; sequence LTLLASKYNV…VLLKYLLKDL (196 aa). 384-391 is an ATP binding site; that stretch reads GPPGVGKT. One can recognise a Lon proteolytic domain in the interval 619-800; that stretch reads THLPGVAIGL…EEVIQLALQP (182 aa). Catalysis depends on residues Ser706 and Lys749.

It belongs to the peptidase S16 family. As to quaternary structure, homohexamer. Organized in a ring with a central cavity.

The protein localises to the cytoplasm. It catalyses the reaction Hydrolysis of proteins in presence of ATP.. ATP-dependent serine protease that mediates the selective degradation of mutant and abnormal proteins as well as certain short-lived regulatory proteins. Required for cellular homeostasis and for survival from DNA damage and developmental changes induced by stress. Degrades polypeptides processively to yield small peptide fragments that are 5 to 10 amino acids long. Binds to DNA in a double-stranded, site-specific manner. This chain is Lon protease, found in Amoebophilus asiaticus (strain 5a2).